Reading from the N-terminus, the 419-residue chain is 3-phosphoshikimate 1-carboxyvinyltransferase (419 aa).

3-phosphoshikimate is bound by residues K21, S22, and R26. K21 serves as a coordination point for phosphoenolpyruvate. Phosphoenolpyruvate is bound by residues G91 and R119. Residues S164, S165, Q166, S191, D305, and K332 each coordinate 3-phosphoshikimate. Position 166 (Q166) interacts with phosphoenolpyruvate. The Proton acceptor role is filled by D305. Phosphoenolpyruvate contacts are provided by R336 and R376.

The protein belongs to the EPSP synthase family. In terms of assembly, monomer.

It localises to the cytoplasm. The catalysed reaction is 3-phosphoshikimate + phosphoenolpyruvate = 5-O-(1-carboxyvinyl)-3-phosphoshikimate + phosphate. The protein operates within metabolic intermediate biosynthesis; chorismate biosynthesis. Catalyzes the transfer of the enolpyruvyl moiety of phosphoenolpyruvate (PEP) to the 5-hydroxyl of shikimate-3-phosphate (S3P) to produce enolpyruvyl shikimate-3-phosphate and inorganic phosphate. The chain is 3-phosphoshikimate 1-carboxyvinyltransferase from Methanothermobacter thermautotrophicus (strain ATCC 29096 / DSM 1053 / JCM 10044 / NBRC 100330 / Delta H) (Methanobacterium thermoautotrophicum).